The chain runs to 218 residues: Pyridoxine/pyridoxamine 5'-phosphate oxidase (218 aa).

Residues 12 to 15 (RLSY) and Arg-70 contribute to the substrate site. FMN contacts are provided by residues 65–70 (RTVLLR), 80–81 (YT), Lys-87, and Gln-109. Substrate contacts are provided by Tyr-127, Arg-131, and Ser-135. FMN contacts are provided by residues 145–146 (QS) and Trp-191. 197–199 (RLH) lines the substrate pocket. Arg-201 serves as a coordination point for FMN.

Belongs to the pyridoxamine 5'-phosphate oxidase family. Homodimer. FMN is required as a cofactor.

The enzyme catalyses pyridoxamine 5'-phosphate + O2 + H2O = pyridoxal 5'-phosphate + H2O2 + NH4(+). The catalysed reaction is pyridoxine 5'-phosphate + O2 = pyridoxal 5'-phosphate + H2O2. It participates in cofactor metabolism; pyridoxal 5'-phosphate salvage; pyridoxal 5'-phosphate from pyridoxamine 5'-phosphate: step 1/1. The protein operates within cofactor metabolism; pyridoxal 5'-phosphate salvage; pyridoxal 5'-phosphate from pyridoxine 5'-phosphate: step 1/1. Its function is as follows. Catalyzes the oxidation of either pyridoxine 5'-phosphate (PNP) or pyridoxamine 5'-phosphate (PMP) into pyridoxal 5'-phosphate (PLP). The protein is Pyridoxine/pyridoxamine 5'-phosphate oxidase of Acinetobacter baumannii (strain AB0057).